We begin with the raw amino-acid sequence, 33 residues long: Toxin Bcg III 25.52 (33 aa).

A disulfide bridge links Cys6 with Cys28.

Its subcellular location is the secreted. The protein localises to the nematocyst. The polypeptide is Toxin Bcg III 25.52 (Bunodosoma cangicum (Sea anemone)).